Reading from the N-terminus, the 286-residue chain is Aldo-keto reductase MAV_4483 (286 aa).

Tyr61 acts as the Proton donor in catalysis. Residues Leu201, Val203, Val239, Arg241, Ser242, Arg247, and Asn251 each coordinate NADPH.

This sequence belongs to the aldo/keto reductase family.

The protein is Aldo-keto reductase MAV_4483 of Mycobacterium avium (strain 104).